A 38-amino-acid chain; its full sequence is Large ribosomal subunit protein bL36 (38 aa).

Belongs to the bacterial ribosomal protein bL36 family.

This Acholeplasma laidlawii (strain PG-8A) protein is Large ribosomal subunit protein bL36.